The sequence spans 130 residues: Small ribosomal subunit protein uS11 (130 aa).

This sequence belongs to the universal ribosomal protein uS11 family. In terms of assembly, part of the 30S ribosomal subunit. Interacts with proteins S7 and S18. Binds to IF-3.

Located on the platform of the 30S subunit, it bridges several disparate RNA helices of the 16S rRNA. Forms part of the Shine-Dalgarno cleft in the 70S ribosome. The polypeptide is Small ribosomal subunit protein uS11 (Caldanaerobacter subterraneus subsp. tengcongensis (strain DSM 15242 / JCM 11007 / NBRC 100824 / MB4) (Thermoanaerobacter tengcongensis)).